We begin with the raw amino-acid sequence, 347 residues long: MSLVSVHNEWDPLEEVIVGTAVGARVPTADRSVFAVEYAGDYESQEQIPSGAYPDRVLKETEEELHVLAAELTKLGVTVRRPGPRDHSALIKTPDWETDGFHDYCPRDGLLSVGQTIIETPMALRSRFLESLAYKDLLLEYFASGSRWLSAPKPRLTDDSYAPQAPAGERLTDEEPVFDAANVLRFGTDLLYLVSDSGNELGAKWLQSAVGDTYTVHPCRKLYASTHVDSTIVPLRPGLVLTNPSRVNDENMPDFLRSWENITCPELVDIGFTGDKPHCSVWIGMNLLVVRPDLAVVDRRQTALIRLLEKHGMNVLPLQLTHSRTLGGGFHCATLDVRRTARETYQF.

Residues Asp-179 and His-227 contribute to the active site. Cys-332 acts as the Amidino-cysteine intermediate in catalysis.

Belongs to the amidinotransferase family. Homodimer.

The catalysed reaction is 1-amino-1-deoxy-scyllo-inositol 4-phosphate + L-arginine = 1-guanidino-1-deoxy-scyllo-inositol 4-phosphate + L-ornithine. The protein operates within antibiotic biosynthesis; streptomycin biosynthesis. Functionally, catalyzes two non-consecutive transamidination reactions. It converts scyllo-inosamine 4-phosphate into N-amidino-scyllo-inosamine 4-phosphate and N1-amidinostreptamine 6-phosphate into streptidine 6-phosphate. This chain is Inosamine-phosphate amidinotransferase 1 (strB1), found in Streptomyces griseus.